Consider the following 86-residue polypeptide: Small ribosomal subunit protein uS17 (86 aa).

This sequence belongs to the universal ribosomal protein uS17 family. Part of the 30S ribosomal subunit.

One of the primary rRNA binding proteins, it binds specifically to the 5'-end of 16S ribosomal RNA. This is Small ribosomal subunit protein uS17 from Lactococcus lactis subsp. cremoris (strain SK11).